Consider the following 249-residue polypeptide: MSIEDLKNTVTKLQERIQELEKKAGIIPDVPKSVRMVLIGPPGAGKGTQAPNLKEKFCACHLATGDMLRAQVAAKTALGVEAKKIMDQGGLVSDEIMVNMIKSELENNQECSKGFILDGFPRTIPQAEKLDSMLESRKTPLEKAVELKIDDELLVARITGRLVHPASGRSYHKLFNPPKKDMTDDVTGEPLVQRSDDNEDALKKRLVTYHKQTEPIVAYYQKTGIWSGVDASQKPTKVWSDILKCLGQN.

43 to 48 provides a ligand contact to ATP; that stretch reads GAGKGT. The NMP stretch occupies residues 63-92; sequence ATGDMLRAQVAAKTALGVEAKKIMDQGGLV. Residues Thr64, Arg69, 90 to 92, 119 to 122, and Gln126 contribute to the AMP site; these read GLV and GFPR. Residues 160-197 form an LID region; the sequence is GRLVHPASGRSYHKLFNPPKKDMTDDVTGEPLVQRSDD. ATP-binding positions include Arg161 and 170–171; that span reads SY. The segment at 177 to 197 is disordered; it reads PPKKDMTDDVTGEPLVQRSDD. Positions 194 and 205 each coordinate AMP. Gln233 contacts ATP.

This sequence belongs to the adenylate kinase family. AK2 subfamily. As to quaternary structure, monomer.

It localises to the cytoplasm. The protein resides in the cytosol. Its subcellular location is the mitochondrion intermembrane space. It carries out the reaction AMP + ATP = 2 ADP. In terms of biological role, catalyzes the reversible transfer of the terminal phosphate group between ATP and AMP. Plays an important role in cellular energy homeostasis and in adenine nucleotide metabolism. Adenylate kinase activity is critical for regulation of the phosphate utilization and the AMP de novo biosynthesis pathways. This Candida albicans (strain SC5314 / ATCC MYA-2876) (Yeast) protein is Adenylate kinase.